The chain runs to 412 residues: Thyroxine-binding globulin (412 aa).

Positions M1–C16 are cleaved as a signal peptide. 4 N-linked (GlcNAc...) asparagine glycosylation sites follow: N35, N98, N164, and N252. 2 residues coordinate thyroxine: N292 and K395.

This sequence belongs to the serpin family. In terms of tissue distribution, expressed by the liver and secreted in plasma.

The protein resides in the secreted. Major thyroid hormone transport protein in serum. In Ovis aries (Sheep), this protein is Thyroxine-binding globulin (SERPINA7).